A 543-amino-acid chain; its full sequence is Hydroxylamine reductase (543 aa).

[4Fe-4S] cluster is bound by residues C3, C6, C15, and C21. Hybrid [4Fe-2O-2S] cluster is bound by residues H239, E263, C307, C398, C426, C451, E486, and K488. Residue C398 is modified to Cysteine persulfide.

The protein belongs to the HCP family. The cofactor is [4Fe-4S] cluster. It depends on hybrid [4Fe-2O-2S] cluster as a cofactor.

Its subcellular location is the cytoplasm. The enzyme catalyses A + NH4(+) + H2O = hydroxylamine + AH2 + H(+). Catalyzes the reduction of hydroxylamine to form NH(3) and H(2)O. This Methanococcus vannielii (strain ATCC 35089 / DSM 1224 / JCM 13029 / OCM 148 / SB) protein is Hydroxylamine reductase.